The chain runs to 309 residues: Taste receptor type 2 member 31 (309 aa).

At 1 to 2 the chain is on the extracellular side; the sequence is MI. The chain crosses the membrane as a helical span at residues 3 to 23; that stretch reads TFLPIIFSILVVVTFVIGNFA. At 24-55 the chain is on the cytoplasmic side; it reads NGFIALVNSTEWVKRQKISFADQILTALAVSR. Residues 56-76 form a helical membrane-spanning segment; sequence VGLLWVLLLNWYATVLNPAFY. Over 77-100 the chain is Extracellular; that stretch reads SVEVRTTTYNVWAVTNHFSNWLAT. The helical transmembrane segment at 101–121 threads the bilayer; it reads SLSIFYLLKIANFSNLIFLHL. The Cytoplasmic segment spans residues 122 to 126; the sequence is KRRVK. The helical transmembrane segment at 127–147 threads the bilayer; the sequence is NVILVMLLGPLLILACHLFMV. The Extracellular portion of the chain corresponds to 148-181; sequence NMNEIVRTKEYEENMTWKYILRNAIYHPGMTVTT. An N-linked (GlcNAc...) asparagine glycan is attached at asparagine 161. A helical membrane pass occupies residues 182–202; sequence LQNLVPFTLTLISFLLLICSL. Over 203–229 the chain is Cytoplasmic; that stretch reads CKHLKKMQLHGKGPQDPSTKVHIKALQ. The helical transmembrane segment at 230–250 threads the bilayer; it reads IVISFLLLCVIYFVSVIISIW. At 251-259 the chain is on the extracellular side; it reads SFESLGNKP. The chain crosses the membrane as a helical span at residues 260–280; the sequence is VFMFCQAIRFSYPSAHPFIVI. The Cytoplasmic segment spans residues 281–309; it reads WGNKKLKQTFLSVLWNVRYWVKGQKPSSL.

Belongs to the G-protein coupled receptor T2R family.

It localises to the membrane. Receptor that may play a role in the perception of bitterness and is gustducin-linked. May play a role in sensing the chemical composition of the gastrointestinal content. The activity of this receptor may stimulate alpha gustducin, mediate PLC-beta-2 activation and lead to the gating of TRPM5. The chain is Taste receptor type 2 member 31 (TAS2R31) from Papio hamadryas (Hamadryas baboon).